We begin with the raw amino-acid sequence, 159 residues long: ATP synthase subunit b (159 aa).

A helical membrane pass occupies residues 4-24 (VGINGTLIVQLVTFVILVALL).

This sequence belongs to the ATPase B chain family. F-type ATPases have 2 components, F(1) - the catalytic core - and F(0) - the membrane proton channel. F(1) has five subunits: alpha(3), beta(3), gamma(1), delta(1), epsilon(1). F(0) has three main subunits: a(1), b(2) and c(10-14). The alpha and beta chains form an alternating ring which encloses part of the gamma chain. F(1) is attached to F(0) by a central stalk formed by the gamma and epsilon chains, while a peripheral stalk is formed by the delta and b chains.

It is found in the cell inner membrane. In terms of biological role, f(1)F(0) ATP synthase produces ATP from ADP in the presence of a proton or sodium gradient. F-type ATPases consist of two structural domains, F(1) containing the extramembraneous catalytic core and F(0) containing the membrane proton channel, linked together by a central stalk and a peripheral stalk. During catalysis, ATP synthesis in the catalytic domain of F(1) is coupled via a rotary mechanism of the central stalk subunits to proton translocation. Its function is as follows. Component of the F(0) channel, it forms part of the peripheral stalk, linking F(1) to F(0). This Acidithiobacillus ferridurans protein is ATP synthase subunit b.